A 202-amino-acid polypeptide reads, in one-letter code: MKKQLLIGSVLLVASSQVWADAASSLKQKLADVSLFSAKFAQTVYDSKGKELQKAGGDLLVQRPNRFNWHTTSPDESLIVADGKDVWVYDPFVEQVTALKLKDAVLNTPFILIAGNDDKFWKHYDVTQEGNVYTVTSRNKDELIASFRVTFDRQNNISRFDVKEAQGQWSEFTLSSFNRKPVLKGNEFVFKIPKGVELDDQR.

The N-terminal stretch at 1-20 (MKKQLLIGSVLLVASSQVWA) is a signal peptide.

This sequence belongs to the LolA family. As to quaternary structure, monomer.

Its subcellular location is the periplasm. In terms of biological role, participates in the translocation of lipoproteins from the inner membrane to the outer membrane. Only forms a complex with a lipoprotein if the residue after the N-terminal Cys is not an aspartate (The Asp acts as a targeting signal to indicate that the lipoprotein should stay in the inner membrane). The protein is Outer-membrane lipoprotein carrier protein of Aeromonas salmonicida (strain A449).